Reading from the N-terminus, the 160-residue chain is Siroheme decarboxylase NirH subunit (160 aa).

This sequence belongs to the Ahb/Nir family. As to quaternary structure, forms a complex composed of NirDL, NirG and NirH. All proteins are required for the total conversion of siroheme to didecarboxysiroheme.

It catalyses the reaction siroheme + 2 H(+) = 12,18-didecarboxysiroheme + 2 CO2. The protein operates within porphyrin-containing compound metabolism. Involved in heme d1 biosynthesis. Catalyzes the decarboxylation of siroheme into didecarboxysiroheme. Siroheme is probably decarboxylated to monodecarboxysiroheme, which is in turn decarboxylated to didecarboxysiroheme. The chain is Siroheme decarboxylase NirH subunit from Paracoccus pantotrophus (Thiosphaera pantotropha).